A 91-amino-acid chain; its full sequence is Small ribosomal subunit protein bS20 (91 aa).

A compositionally biased stretch (basic and acidic residues) spans 1 to 18 (MPLHKSAEKRLRQSEKRN). The disordered stretch occupies residues 1–24 (MPLHKSAEKRLRQSEKRNVRNRAR).

It belongs to the bacterial ribosomal protein bS20 family.

Binds directly to 16S ribosomal RNA. This is Small ribosomal subunit protein bS20 from Chlorobium phaeobacteroides (strain DSM 266 / SMG 266 / 2430).